Reading from the N-terminus, the 63-residue chain is Hyphancin-3D (63 aa).

A signal peptide spans 1 to 22 (MNFSRIIFLVFACFVALASVSA). Residues 23-26 (APEP) constitute a propeptide, removed by a dipeptidylpeptidase. Leu-61 is modified (leucine amide).

It belongs to the cecropin family.

The protein resides in the secreted. Has antibacterial activity. This is Hyphancin-3D from Hyphantria cunea (Fall webworm moth).